A 2290-amino-acid polypeptide reads, in one-letter code: MGRIQEVGWVTAGLVIWAGTCYYIYKFTKGRAQSVRTLARNGSTVKMETVVGVQSQTLAINEAEIKTKPQVEIGAETGARSGPRAEVETKATAIAIHRANSQAKAMVGAEPETQSESKVVAGTLVMTEAVTLTEVKAKAREVAMKEAVTQTDAEAGKIVKKEAVTQTKAKAWALVAKTEAKREAMTQTKAETHILAEKETEINRVMVTQSETLAVPREVAKMGATNKTGIVDETKTRALEETVSVAKTQSEARPGATVDARGNPNGMSREVAGVDMKSCAQSQAVTKIQGDDMPGTGVEDMGNCKTMSRAESGADTRASAQPQIFAKTQTEAIPGAKIDAGGNTNAMCKVGAGADVRACIQPQTVAKKQAEVTSGARVDGRGNTNVISKAITGADMRAAAQPQAVASTHAEAMSDAKVKNRGNPNAMTKAGAKANLRANSQVEALPDARDKSRGNPNVMAKVGDGTDMLSCTQPQLVASVQADTLSDGKIKVRGNVNTMPKEGAGVDMKAQGMAQSQGEALPNTRGKARGKAKAKCKTGPGMDMKTCTQPQAGVKTPAEALLDSRVDGRGNPNATSKAGTKADQRVCGQPLVVANPQGEALPGAKNKVKGNPHTVLKVGAGEGTTDSAQPEAVVSFQGEALLGTKNKVKGNPNVVLKAEVGEGAMGTAQLQIMASSKGEALLDSKNKVKGNSNAVSKAGAGTDTTGSVQPQIVANSQGEVLPGAKNKIRGNPTTVPNSGVGPYTTDSARLQAVANSQGEVLPGAKNKVKANLNAVSKAEAGMGATGSVQPQAVANSHCETLPGAKNKVRGNWNAVSKAGAGMDTRGSAQPQAVANSQGEVLPGAKNKVKGNPNVVSKAGAREDTVGSTQPQVLASSQRETLPGARNKVKGNSNVVSKAGAREDTMGSAQPQVVANSQRETLPGARNKVKGNSNAISKAEAGAGIMGSVQVQVVASFQGEVLPGAKNKVRGNSNAVPKAEAGADTVGSAQPQAVANSQSETLLGARNKVKGNTIAVPKAGTGAGTRHSAQPQIVAGSQGETLPGARDKSMSTSEAEATAEDEAYAKPEAEAMPTSESEGGSGTQACRKTQPNIHDYYWNGIGVEDWIAAERWIKFRFQTMDGDWENSVSWADDENEASIGSWSGASDKAGIIRSWAVACDETSVKSWAGARAENVVGIGTWARAGEQASGGLWAGGQTSEGTWAGDKASGGAWTGAENQASGGSWALAGNQAIGELWAAGQASDGSWPGGQASGVSWVGEEAIGGSWTGAENQASEGSWAGAGAGNMSSVSYWAGVVDQAGGGSWAGTSDQSGGGSKPRFEDQASGEGSWAGAGGQASGGSMLGPEDQSSGRSWADTADQASGGSRLGHVDQSSGGAWAGTLDQSGGGSKPRFENQTTEEGSWAGAGGQAGGGSKVGPEDQSSGRSWANSGDQISGGFLVGIVDQANGGSWTGAGHPASVGPKPIFEDQVSGRGSWADAREQVVGDSRLGLRDQSSGDSWAGTGDQASGWFCVCPGSQTNGGSWGGASGQDVGGSRPGPTNQSSAGSWDSPGSQVSGSCWTGAGAVDQAGGCSKPGFEDQAIGGGFWPGAGDQTGGGSRPGSEDQSSGIGSWGVAGGQVLGGARPGPADQSSGGSWAGTGNQSSGRSWIGPGDQAVDCSKPEFEDQACGGGSWAGAGSQASGESWAGSRPGNEAIGGSRMGSEDQATGGSWARSEDQASGRFQVSFEVEANEGFWFGPGAEAVIGSWCWTEEKADIVSRPDDKDEATTASRSGAGEEAMICSRIEAENKASSGSWIRSEEVAYMGSCVGAEAGAGAEAGAGAEAGAGAGAEAGAEAGAGAGAGPGTESGAGIWSWDGDATTVESRLGAGEEAGVESWTLARNVGEDELSRESSPDIEEISLRSLFWAESENSNTFRSKSGKDASFESGAGDNTSIKDKFEAAGGVDIGSWFCAGNENTSEDKSAPKAKAKKSSESRGIYPYMVPGAGMGSWDGAMIWSETKFAHQSEASFPVEDESRKQTRTGEKTRPWSCRCKHEANMDPRDLEKLICMIEMTEDPSVHEIANNALYNSADYSYSHEVVRNVGGISVIESLLNNPYPSVRQKALNALNNISVAAENHRKVKTYLNQVCEDTVTYPLNSNVQLAGLRLIRHLTITSEYQHMVTNYISEFLRLLTVGSGETKDHVLGMLLNFSKNPSMTKDLLIANAPTSLINIFSKKETKENILNALSLFENINYHFKRRAKAFTQDKFSKNSLYFLFQRPKACAKKLRALAAECNDPEVKERVELLISKL.

A helical membrane pass occupies residues V7–I24. 8 disordered regions span residues Q517–Q549, S564–D583, K967–A988, A1014–K1087, G1302–G1430, G1521–D1715, S1911–N1931, and N1954–E1973. Residues G526–C536 show a composition bias toward basic residues. A compositionally biased stretch (polar residues) spans T1073 to K1087. Composition is skewed to gly residues over residues S1328–M1341 and A1403–K1414. Residues D1419–G1430 show a composition bias toward polar residues. Residues G1521–R1535 are compositionally biased toward gly residues. The span at G1537 to C1558 shows a compositional bias: polar residues. Gly residues-rich tracts occupy residues I1581–R1598 and G1609–R1623. The span at D1628–R1645 shows a compositional bias: polar residues. Low complexity predominate over residues G1674 to S1687. ARM repeat units lie at residues R2031 to D2071, S2073 to V2112, I2153 to K2192, and P2194 to Y2234.

It belongs to the eutherian X-chromosome-specific Armcx family.

It is found in the membrane. This Homo sapiens (Human) protein is Armadillo repeat-containing X-linked protein 4 (ARMCX4).